Consider the following 181-residue polypeptide: Protein CENTRORADIALIS (181 aa).

The protein belongs to the phosphatidylethanolamine-binding protein family. As to quaternary structure, may form homodimers in solution.

The protein resides in the cytoplasm. Expression of CEN leads to a morphological switch between shoot growth and the development of flower structures (inflorescence). May form complexes with phosphorylated ligands by interfering with kinases and their effectors. This is Protein CENTRORADIALIS (CEN) from Antirrhinum majus (Garden snapdragon).